Reading from the N-terminus, the 127-residue chain is Glycine cleavage system H protein (127 aa).

The Lipoyl-binding domain occupies 22–104; that stretch reads EVVIGITHFA…YEGAWMVKVE (83 aa). N6-lipoyllysine is present on K63.

Belongs to the GcvH family. In terms of assembly, the glycine cleavage system is composed of four proteins: P, T, L and H. (R)-lipoate serves as cofactor.

Functionally, the glycine cleavage system catalyzes the degradation of glycine. The H protein shuttles the methylamine group of glycine from the P protein to the T protein. In terms of biological role, is also involved in protein lipoylation via its role as an octanoyl/lipoyl carrier protein intermediate. The sequence is that of Glycine cleavage system H protein from Bacillus cereus (strain G9842).